We begin with the raw amino-acid sequence, 356 residues long: Histidinol-phosphate aminotransferase 2 (356 aa).

Lysine 214 bears the N6-(pyridoxal phosphate)lysine mark.

Belongs to the class-II pyridoxal-phosphate-dependent aminotransferase family. Histidinol-phosphate aminotransferase subfamily. Homodimer. Requires pyridoxal 5'-phosphate as cofactor.

It catalyses the reaction L-histidinol phosphate + 2-oxoglutarate = 3-(imidazol-4-yl)-2-oxopropyl phosphate + L-glutamate. Its pathway is amino-acid biosynthesis; L-histidine biosynthesis; L-histidine from 5-phospho-alpha-D-ribose 1-diphosphate: step 7/9. The polypeptide is Histidinol-phosphate aminotransferase 2 (Dechloromonas aromatica (strain RCB)).